The following is a 307-amino-acid chain: UPF0276 protein Bphyt_5128 (307 aa).

Belongs to the UPF0276 family.

The polypeptide is UPF0276 protein Bphyt_5128 (Paraburkholderia phytofirmans (strain DSM 17436 / LMG 22146 / PsJN) (Burkholderia phytofirmans)).